We begin with the raw amino-acid sequence, 512 residues long: Alpha-1B-glycoprotein (512 aa).

Positions 1-18 (MSLLATVLLLWGFTLGPG) are cleaved as a signal peptide. Ig-like V-type domains are found at residues 22–126 (MLDS…VTGK), 127–219 (EPLP…MYAS), 220–312 (QAPP…PVEL), 313–415 (MWSD…LRVN), and 416–512 (GPPP…IVEG). Residues Asn-44, Asn-89, and Asn-192 are each glycosylated (N-linked (GlcNAc...) asparagine). 5 cysteine pairs are disulfide-bonded: Cys-49–Cys-96, Cys-153–Cys-195, Cys-245–Cys-292, Cys-343–Cys-392, and Cys-441–Cys-488. 4 N-linked (GlcNAc...) asparagine glycosylation sites follow: Asn-369, Asn-381, Asn-389, and Asn-485.

As to quaternary structure, interacts with CRISP3. As to expression, expressed in the liver hepatocytes of male and female GH transgenic mice and in the liver of female, but not of male, non-transgenic mice.

Its subcellular location is the secreted. This Mus musculus (Mouse) protein is Alpha-1B-glycoprotein (A1bg).